The chain runs to 1205 residues: MKVTVCFGRTGIVVPCKEGQLRVGELTQQALQRYLKTREKGPGYWVKIHHLEYTDGGILDPDDVLADVVEDKDKLIAVFEEQEPLHKIESPSGNPADRQSPDAFETEVAAQLAAFKPIGGEIEVTPSALKLGTPLLVRRSSDPVPGPPADTQPSASHPGGQSLKLVVPDSTQNLEDREVLNGVQTELLTSPRTKDTLSDMTRTVEISGEGGPLGIHVVPFFSSLSGRILGLFIRGIEDNSRSKREGLFHENECIVKINNVDLVDKTFAQAQDVFRQAMKSPSVLLHVLPPQNREQYEKSVIGSLNIFGNNDGVLKTKVPPPVHGKSGLKTANLTGTDSPETDASASLQQNKSPRVPRLGGKPSSPSLSPLMGFGSNKNAKKIKIDLKKGPEGLGFTVVTRDSSIHGPGPIFVKNILPKGAAIKDGRLQSGDRILEVNGRDVTGRTQEELVAMLRSTKQGETASLVIARQEGHFLPRELKGEPDCCALSLETSEQLTFEIPLNDSGSAGLGVSLKGNKSRETGTDLGIFIKSIIHGGAAFKDGRLRMNDQLIAVNGESLLGKSNHEAMETLRRSMSMEGNIRGMIQLVILRRPERPMEDPAECGAFSKPCFENCQNAVTTSRRNDNSILHPLGTCSPQDKQKGLLLPNDGWAESEVPPSPTPHSALGLGLEDYSHSSGVDSAVYFPDQHINFRSVTPARQPESINLKASKSMDLVPDESKVHSLAGQKSESPSKDFGPTLGLKKSSSLESLQTAVAEVRKNDLPFHRPRPHMVRGRGCNESFRAAIDKSYDGPEEIEADGLSDKSSHSGQGALNCESAPQGNSELEDMENKARKVKKTKEKEKKKEKGKLKVKEKKRKEENEDPERKIKKKGFGAMLRFGKKKEDKGGKAEQKGTLKHGGLREEELEKMKEERERIGAKHQELREKQARGLLDYATGAIGSVYDMDDDEMDPNYARVNHFREPCTSANVFRSPSPPRAGPFGYPRDGHPLSPERDHLEGLYAKVNKPYHPLVPADSGRPTGGSTDRIQKLRKEYYQARREGFPLYEDDEGRARPSEYDLLWVPGRGPDGNAHNLRFEGMERQYASLPRGGPADPVDYLPAAPRGLYKERELPYYPGAHPMHPPKGSYPRPTELRVADLRYPQHYPPPPAPQHKGPFRQDVPPSPPQHQRMPAYQETGRPGPRGGSPDQYPYRTQDSRQKNPMTAAV.

Disordered stretches follow at residues glutamate 83–phenylalanine 104 and valine 137–leucine 165. Residue serine 100 is modified to Phosphoserine. In terms of domain architecture, PDZ 1 spans threonine 201–proline 289. Residues valine 318–glycine 374 form a disordered region. Positions lysine 329 to serine 352 are enriched in polar residues. Phosphoserine occurs at positions 346, 352, and 368. A compositionally biased stretch (low complexity) spans proline 356–glycine 374. PDZ domains follow at residues lysine 383–arginine 468 and glutamate 498–glutamine 585. Phosphoserine occurs at positions 635, 710, 728, 730, 746, 749, and 801. The tract at residues alanine 707–lysine 743 is disordered. 2 disordered regions span residues alanine 784 to glutamate 921 and proline 1111 to valine 1205. Positions histidine 806–serine 822 are enriched in polar residues. Basic and acidic residues-rich tracts occupy residues lysine 838–arginine 865 and lysine 881–glutamate 921. Phosphoserine is present on serine 1184.

Belongs to the PAR3 family. In terms of assembly, interacts with PARD6B. Interacts with INSC/inscuteable. Highly expressed in kidney, lung and skeletal muscle. Expressed at intermediate levels in brain, heart, placenta, liver and pancreas. Isoform 1 is predominant, while isoform 2 and isoform 3 are expressed at lower levels.

It is found in the endomembrane system. It localises to the cell junction. The protein resides in the tight junction. Functionally, putative adapter protein involved in asymmetrical cell division and cell polarization processes. May play a role in the formation of epithelial tight junctions. This chain is Partitioning defective 3 homolog B (PARD3B), found in Homo sapiens (Human).